The primary structure comprises 255 residues: Large ribosomal subunit protein uL4 (255 aa).

The protein belongs to the universal ribosomal protein uL4 family. As to quaternary structure, part of the 50S ribosomal subunit.

One of the primary rRNA binding proteins, this protein initially binds near the 5'-end of the 23S rRNA. It is important during the early stages of 50S assembly. It makes multiple contacts with different domains of the 23S rRNA in the assembled 50S subunit and ribosome. In terms of biological role, forms part of the polypeptide exit tunnel. The sequence is that of Large ribosomal subunit protein uL4 from Pyrococcus furiosus (strain ATCC 43587 / DSM 3638 / JCM 8422 / Vc1).